Reading from the N-terminus, the 220-residue chain is Fructose-6-phosphate aldolase (220 aa).

The active-site Schiff-base intermediate with substrate is Lys85.

It belongs to the transaldolase family. Type 3A subfamily. As to quaternary structure, homodecamer.

It is found in the cytoplasm. It carries out the reaction beta-D-fructose 6-phosphate = dihydroxyacetone + D-glyceraldehyde 3-phosphate. In terms of biological role, catalyzes the reversible formation of fructose 6-phosphate from dihydroxyacetone and D-glyceraldehyde 3-phosphate via an aldolization reaction. This chain is Fructose-6-phosphate aldolase, found in Enterobacter sp. (strain 638).